Consider the following 65-residue polypeptide: DNA-directed RNA polymerase subunit omega (65 aa).

Belongs to the RNA polymerase subunit omega family. The RNAP catalytic core consists of 2 alpha, 1 beta, 1 beta' and 1 omega subunit. When a sigma factor is associated with the core the holoenzyme is formed, which can initiate transcription.

It carries out the reaction RNA(n) + a ribonucleoside 5'-triphosphate = RNA(n+1) + diphosphate. Promotes RNA polymerase assembly. Latches the N- and C-terminal regions of the beta' subunit thereby facilitating its interaction with the beta and alpha subunits. In Finegoldia magna (strain ATCC 29328 / DSM 20472 / WAL 2508) (Peptostreptococcus magnus), this protein is DNA-directed RNA polymerase subunit omega.